Reading from the N-terminus, the 475-residue chain is 3-isopropylmalate dehydratase large subunit (475 aa).

[4Fe-4S] cluster-binding residues include Cys347, Cys407, and Cys410. A disordered region spans residues 418 to 442 (LAPGERSASTSNRNFEGRQGKGGRT).

The protein belongs to the aconitase/IPM isomerase family. LeuC type 1 subfamily. Heterodimer of LeuC and LeuD. [4Fe-4S] cluster serves as cofactor.

It catalyses the reaction (2R,3S)-3-isopropylmalate = (2S)-2-isopropylmalate. The protein operates within amino-acid biosynthesis; L-leucine biosynthesis; L-leucine from 3-methyl-2-oxobutanoate: step 2/4. Its function is as follows. Catalyzes the isomerization between 2-isopropylmalate and 3-isopropylmalate, via the formation of 2-isopropylmaleate. The protein is 3-isopropylmalate dehydratase large subunit of Streptomyces griseus subsp. griseus (strain JCM 4626 / CBS 651.72 / NBRC 13350 / KCC S-0626 / ISP 5235).